The chain runs to 258 residues: uncharacterized protein (258 aa).

This is an uncharacterized protein from Caenorhabditis elegans.